We begin with the raw amino-acid sequence, 383 residues long: Histidinol-phosphate aminotransferase (383 aa).

K240 is modified (N6-(pyridoxal phosphate)lysine).

It belongs to the class-II pyridoxal-phosphate-dependent aminotransferase family. Histidinol-phosphate aminotransferase subfamily. As to quaternary structure, homodimer. Pyridoxal 5'-phosphate is required as a cofactor.

The enzyme catalyses L-histidinol phosphate + 2-oxoglutarate = 3-(imidazol-4-yl)-2-oxopropyl phosphate + L-glutamate. It functions in the pathway amino-acid biosynthesis; L-histidine biosynthesis; L-histidine from 5-phospho-alpha-D-ribose 1-diphosphate: step 7/9. This Oleidesulfovibrio alaskensis (strain ATCC BAA-1058 / DSM 17464 / G20) (Desulfovibrio alaskensis) protein is Histidinol-phosphate aminotransferase.